The chain runs to 129 residues: NADH-quinone oxidoreductase subunit A (129 aa).

3 helical membrane-spanning segments follow: residues 9–29 (FPIG…LGLA), 68–88 (LLFI…VLLL), and 97–117 (LGWP…AGLV).

The protein belongs to the complex I subunit 3 family. As to quaternary structure, NDH-1 is composed of 14 different subunits. Subunits NuoA, H, J, K, L, M, N constitute the membrane sector of the complex.

The protein localises to the cell inner membrane. The catalysed reaction is a quinone + NADH + 5 H(+)(in) = a quinol + NAD(+) + 4 H(+)(out). Its function is as follows. NDH-1 shuttles electrons from NADH, via FMN and iron-sulfur (Fe-S) centers, to quinones in the respiratory chain. The immediate electron acceptor for the enzyme in this species is believed to be ubiquinone. Couples the redox reaction to proton translocation (for every two electrons transferred, four hydrogen ions are translocated across the cytoplasmic membrane), and thus conserves the redox energy in a proton gradient. This Anaeromyxobacter sp. (strain K) protein is NADH-quinone oxidoreductase subunit A.